A 770-amino-acid polypeptide reads, in one-letter code: Transducin-like enhancer protein 1 (770 aa).

The tract at residues 1 to 131 is q domain; the sequence is MFPQSRHPTP…IIGQQQLQAQ (131 aa). Disordered stretches follow at residues 128–157 and 176–348; these read LQAQ…GIPP and HLAI…PAID. Residues 132 to 199 form a GP domain region; the sequence is HLSHGHGPPV…HHRDREPGTS (68 aa). Basic and acidic residues-rich tracts occupy residues 178–196 and 209–246; these read AIKD…DREP and RGTD…KSDD. The ccN domain stretch occupies residues 200-268; the sequence is NSLLVPDSLR…SPRASPAHSP (69 aa). Positions 225 to 228 match the Nuclear localization signal motif; the sequence is KKRK. Residue serine 239 is modified to Phosphoserine. The segment covering 257–266 has biased composition (low complexity); that stretch reads PSSPRASPAH. A phosphoserine; by CDK1 mark is found at serine 259, serine 263, and serine 267. Basic and acidic residues predominate over residues 267 to 283; sequence SPRENGIDKNRLLKKDA. Residues 269 to 450 form an SP domain region; sequence RENGIDKNRL…GGKPAYSFHV (182 aa). Low complexity predominate over residues 284–298; sequence SSSPASTASSASSTS. Residue serine 286 is modified to Phosphoserine. Positions 300–310 are enriched in basic and acidic residues; the sequence is KSKEMSLHEKA. WD repeat units follow at residues 470–501, 528–558, 572–602, 614–644, 696–726, and 737–767; these read GIPR…HVYT, NRDN…SIWD, SSAP…AVWD, GHTD…RSWD, LHES…NAWR, and KESS…TVYE.

The protein belongs to the WD repeat Groucho/TLE family. In terms of assembly, homooligomer and heterooligomer with other family members. Binds RUNX1, RUNX3, FOXA2, KDM6A, UTY, histone H3, HESX1, ESRRG and the NF-kappa-B subunit RELA. Interacts with HES1 (via WRPW motif). Binds TCF7, LEF1, TCF7L1 and TCF7L2. Interacts with SIX3. Interacts with EFNB1. Interacts with TLE4. Interacts with FOXG1/BF-1; the interaction is inhibited by TLE6/GRG6. Post-translationally, phosphorylated, probably by CDK1. The degree of phosphorylation varies throughout the cell cycle, and is highest at the G2/M transition. Becomes hyperphosphorylated in response to cell differentiation and interaction with HES1 or RUNX1. In terms of processing, ubiquitinated by XIAP/BIRC4. As to expression, in all tissues examined, mostly in brain, liver and muscle.

It is found in the nucleus. In terms of biological role, transcriptional corepressor that binds to a number of transcription factors. Inhibits NF-kappa-B-regulated gene expression. Inhibits the transcriptional activation mediated by FOXA2, and by CTNNB1 and TCF family members in Wnt signaling. Enhances FOXG1/BF-1- and HES1-mediated transcriptional repression. The effects of full-length TLE family members may be modulated by association with dominant-negative AES. Unusual function as coactivator for ESRRG. This is Transducin-like enhancer protein 1 (TLE1) from Homo sapiens (Human).